The sequence spans 230 residues: Ethylene-responsive transcription factor ERF012 (230 aa).

Over residues 1–17 the composition is skewed to basic and acidic residues; the sequence is MVKQERKIQTSSTKKEM. The tract at residues 1–51 is disordered; it reads MVKQERKIQTSSTKKEMPLSSSPSSSSSSSSSSSSSSCKNKNKKSKIKKYK. Positions 20 to 39 are enriched in low complexity; that stretch reads SSSPSSSSSSSSSSSSSSCK. Residues 40–51 are compositionally biased toward basic residues; that stretch reads NKNKKSKIKKYK. The segment at residues 49–106 is a DNA-binding region (AP2/ERF); that stretch reads KYKGVRMRSWGSWVSEIRAPNQKTRIWLGSYSTAEAAARAYDVALLCLKGPQANLNFP.

Belongs to the AP2/ERF transcription factor family. ERF subfamily. In terms of tissue distribution, expressed cotyledons, ovules and seeds of immature siliques.

The protein localises to the nucleus. Its function is as follows. Transcriptional activator involved in the regulation of plant development and tolerance to abiotic stresses. Involved in salt and osmotic stress response pathways. May be regulated by the stress-related genes RD29A, RD22, DREB1A or P5CS during stress response. Binds to the GCC-box pathogenesis-related promoter element. May be involved in the regulation of gene expression by stress factors and by components of stress signal transduction pathways. This is Ethylene-responsive transcription factor ERF012 (ERF012) from Arabidopsis thaliana (Mouse-ear cress).